The sequence spans 184 residues: MNWRSERIWIELITGSRKTSNFCWACILFLGSIGFLLVGISSYLGRNLISLFPSQQILFFPQGIVMCFYGIAGLFISSYLWCTISWNVGSGYDRFDRKEGIVCIFRWGFPGINRRIFLRFRMRDIRSIRMKVKEGLYPRRVLYMEIRGRGDIPLTRTDENLSPLEIEQKAAEWAYFLRVPIEVF.

2 consecutive transmembrane segments (helical) span residues 22–42 and 57–77; these read FCWA…GISS and ILFF…LFIS.

It belongs to the Ycf4 family.

It is found in the plastid. It localises to the chloroplast thylakoid membrane. In terms of biological role, seems to be required for the assembly of the photosystem I complex. The polypeptide is Photosystem I assembly protein Ycf4 (Illicium oligandrum (Star anise)).